Here is a 174-residue protein sequence, read N- to C-terminus: Crossover junction endodeoxyribonuclease RuvC (174 aa).

Catalysis depends on residues D8, E67, and D139. Residues D8, E67, and D139 each contribute to the Mg(2+) site.

It belongs to the RuvC family. In terms of assembly, homodimer which binds Holliday junction (HJ) DNA. The HJ becomes 2-fold symmetrical on binding to RuvC with unstacked arms; it has a different conformation from HJ DNA in complex with RuvA. In the full resolvosome a probable DNA-RuvA(4)-RuvB(12)-RuvC(2) complex forms which resolves the HJ. It depends on Mg(2+) as a cofactor.

It is found in the cytoplasm. It catalyses the reaction Endonucleolytic cleavage at a junction such as a reciprocal single-stranded crossover between two homologous DNA duplexes (Holliday junction).. Its function is as follows. The RuvA-RuvB-RuvC complex processes Holliday junction (HJ) DNA during genetic recombination and DNA repair. Endonuclease that resolves HJ intermediates. Cleaves cruciform DNA by making single-stranded nicks across the HJ at symmetrical positions within the homologous arms, yielding a 5'-phosphate and a 3'-hydroxyl group; requires a central core of homology in the junction. The consensus cleavage sequence is 5'-(A/T)TT(C/G)-3'. Cleavage occurs on the 3'-side of the TT dinucleotide at the point of strand exchange. HJ branch migration catalyzed by RuvA-RuvB allows RuvC to scan DNA until it finds its consensus sequence, where it cleaves and resolves the cruciform DNA. This is Crossover junction endodeoxyribonuclease RuvC from Pseudomonas paraeruginosa (strain DSM 24068 / PA7) (Pseudomonas aeruginosa (strain PA7)).